The sequence spans 419 residues: Tyrosine--tRNA ligase (419 aa).

Residue Tyr34 participates in L-tyrosine binding. Residues 39-48 (PSGDSMHIGH) carry the 'HIGH' region motif. Positions 168 and 172 each coordinate L-tyrosine. Positions 230–234 (KFGKS) match the 'KMSKS' region motif. Lys233 provides a ligand contact to ATP. The S4 RNA-binding domain occupies 352–418 (ANLVDWLVTL…GKKKYFLVSY (67 aa)).

It belongs to the class-I aminoacyl-tRNA synthetase family. TyrS type 1 subfamily. Homodimer.

The protein resides in the cytoplasm. The catalysed reaction is tRNA(Tyr) + L-tyrosine + ATP = L-tyrosyl-tRNA(Tyr) + AMP + diphosphate + H(+). Its function is as follows. Catalyzes the attachment of tyrosine to tRNA(Tyr) in a two-step reaction: tyrosine is first activated by ATP to form Tyr-AMP and then transferred to the acceptor end of tRNA(Tyr). This chain is Tyrosine--tRNA ligase, found in Listeria monocytogenes serotype 4b (strain F2365).